A 710-amino-acid chain; its full sequence is Ferrioxamine receptor (710 aa).

The signal sequence occupies residues 1–26; it reads MFSAFIIKRSAILCSLAMFIPLASIA. The TonB box motif lies at 28-35; that stretch reads DTIEVTAK. 30 beta stranded membrane-spanning segments follow: residues 29–37, 65–73, 91–99, 106–114, 137–145, 152–160, 180–188, 194–202, 208–216, 259–267, 271–279, 293–301, 309–317, 353–361, 370–378, 427–435, 443–451, 476–484, 491–499, 517–525, 531–539, 555–563, 567–575, 579–587, 610–618, 624–632, 649–657, 671–679, 684–692, and 702–710; these read TIEVTAKAG, TAQSVSVVT, YTPGVFTGF, YDTVALRGF, NVLQVDPWF, IKGPSSALY, SEGHFRLTA, QVAAFDYTD, WAFRLTGIT, GGYHSAVPA, IYGQKLSRG, WQQIYSYEF, WSFRQNASY, FAVDNQLEA, HKVLLGVDF, YEQSGVYLQ, WHLNLSGRY, GRASLLYSF, YVSYSQAIT, EQYEVGIIY, TSLYSAALY, YYVPAGKVN, LELEARSQI, LSVIAGYTY, NMASLWAQY, INVGAGIRY, YTLGDASVR, FVQLNVNNI, YVAACYSTS, and VQATVGYDF. The TBDR plug domain occupies 61–174; sequence PLILTAQSVS…PGGVVMMTSK (114 aa). Residues 181 to 710 form the TBDR beta-barrel domain; sequence EGHFRLTAGN…SVQATVGYDF (530 aa). Positions 693-710 match the TonB C-terminal box motif; sequence YCYWGAERSVQATVGYDF.

This sequence belongs to the TonB-dependent receptor family.

Its subcellular location is the cell outer membrane. Its function is as follows. Ferrioxamine binding and uptake, in association with the TonB protein. The sequence is that of Ferrioxamine receptor (foxA) from Yersinia enterocolitica.